The chain runs to 351 residues: Histidine protein kinase SaeS (351 aa).

2 helical membrane-spanning segments follow: residues I9 to I29 and T40 to I60. One can recognise an HAMP domain in the interval N61 to N114. The Histidine kinase domain occupies N129–D348. H132 is subject to Phosphohistidine; by autocatalysis.

Post-translationally, autophosphorylated.

Its subcellular location is the cell membrane. It carries out the reaction ATP + protein L-histidine = ADP + protein N-phospho-L-histidine.. Member of the two-component regulatory system SaeR/SaeS involved in the regulation of staphylococcal virulence factors in a strain-dependent fashion. Probably functions as a membrane-associated protein kinase that upon sensing the appropriate signal, autophosphorylates and in turn activates the cytosolic response regulator SaeR. The chain is Histidine protein kinase SaeS (saeS) from Staphylococcus aureus (strain bovine RF122 / ET3-1).